The sequence spans 844 residues: Prickle-like protein 2 (844 aa).

Residues 18–126 (FDFQRNSTSD…NVRPFPVTMT (109 aa)) enclose the PET domain. Ser-92 is modified (phosphoserine). 3 LIM zinc-binding domains span residues 128-193 (AICE…CLKP), 193-253 (PRCA…LYAE), and 253-317 (EYCD…EDPN). Disordered stretches follow at residues 314–350 (EDPNGSDSSDSAFQNARAKESRRSAKIGKNKGKTEEP) and 481–519 (ESYSDMSSQSFSETRGSIQVPKYEEEEEEEGGLSTQQCR). Polar residues predominate over residues 318–327 (GSDSSDSAFQ). 3 positions are modified to phosphoserine: Ser-319, Ser-321, and Ser-322. A compositionally biased stretch (low complexity) spans 481–493 (ESYSDMSSQSFSE). Residues Thr-534, Thr-536, and Thr-539 each carry the phosphothreonine modification. Residues Ser-543, Ser-546, Ser-607, and Ser-642 each carry the phosphoserine modification. The tract at residues 639–709 (MHQSFDFDGG…HLASEREAIS (71 aa)) is disordered. Residues 682–692 (FRPHRSRRSRR) show a composition bias toward basic residues. Over residues 693-709 (SRSDNALHLASEREAIS) the composition is skewed to basic and acidic residues. Phosphoserine is present on Ser-731. Positions 822 to 844 (STLGGRGQLHSRKRQKSKNCIIS) are disordered. Cys-841 carries the post-translational modification Cysteine methyl ester. Cys-841 carries S-farnesyl cysteine lipidation. Residues 842–844 (IIS) constitute a propeptide, removed in mature form.

It belongs to the prickle / espinas / testin family. In terms of tissue distribution, expressed in brain, eye and testis. Additionally in fetal brain, adult cartilage, pancreatic islet, gastric cancer and uterus tumors.

It localises to the nucleus membrane. The chain is Prickle-like protein 2 (PRICKLE2) from Homo sapiens (Human).